A 246-amino-acid polypeptide reads, in one-letter code: ATP synthase subunit b 1 (246 aa).

Residues 5 to 27 traverse the membrane as a helical segment; it reads WFTFTAQVINFLVLVGLLRYFLY.

It belongs to the ATPase B chain family. In terms of assembly, F-type ATPases have 2 components, F(1) - the catalytic core - and F(0) - the membrane proton channel. F(1) has five subunits: alpha(3), beta(3), gamma(1), delta(1), epsilon(1). F(0) has three main subunits: a(1), b(2) and c(10-14). The alpha and beta chains form an alternating ring which encloses part of the gamma chain. F(1) is attached to F(0) by a central stalk formed by the gamma and epsilon chains, while a peripheral stalk is formed by the delta and b chains.

Its subcellular location is the cell inner membrane. F(1)F(0) ATP synthase produces ATP from ADP in the presence of a proton or sodium gradient. F-type ATPases consist of two structural domains, F(1) containing the extramembraneous catalytic core and F(0) containing the membrane proton channel, linked together by a central stalk and a peripheral stalk. During catalysis, ATP synthesis in the catalytic domain of F(1) is coupled via a rotary mechanism of the central stalk subunits to proton translocation. Functionally, component of the F(0) channel, it forms part of the peripheral stalk, linking F(1) to F(0). This chain is ATP synthase subunit b 1, found in Rhodopirellula baltica (strain DSM 10527 / NCIMB 13988 / SH1).